The sequence spans 433 residues: Mblk-1-related factor 1 (433 aa).

One can recognise an HTH psq-type 1 domain in the interval 145 to 197; sequence NKSNILRRNYTVEDLTQAVEDIRQGKLGTRRASVVYGIPRSTLRNKIYKLEAE. Residues 173–193 constitute a DNA-binding region (H-T-H motif); sequence TRRASVVYGIPRSTLRNKIYK. Positions 235-254 are enriched in low complexity; sequence GNQSDSSSSSPHASMCPSSP. Disordered stretches follow at residues 235-278 and 304-338; these read GNQS…SCSP and ANIS…PKRG. The segment covering 304 to 319 has biased composition (polar residues); sequence ANISNVDTHTPTPISE. Residues 320–332 show a composition bias toward basic and acidic residues; sequence KSQKMHGNEEWKR. Residues 334–386 enclose the HTH psq-type 2 domain; the sequence is RPKRGQYRKYDKNALDEAVRSVRRGEMTVHRAGSFFGVPHSTLEYKVKERNLM. A DNA-binding region (H-T-H motif) is located at residues 362–382; that stretch reads VHRAGSFFGVPHSTLEYKVKE. Residues 393-433 form a disordered region; it reads LYSHDSSTSEDGSQLVTSTISEKSDSSSHTSTPIPFPISLV. Residues 396 to 408 are compositionally biased toward polar residues; the sequence is HDSSTSEDGSQLV. Residues 409-424 show a composition bias toward low complexity; it reads TSTISEKSDSSSHTST.

In terms of tissue distribution, expressed in AIM, RIC, AIZ, ADF, ADL, ASK, AWA, AUA, AIN, RIH (or RIR) and RIF head neurons and, in PVP, PVQ and DVA (or DVC) tail neurons, some intestinal cells, somatic gonad and vulva.

It is found in the nucleus. Functionally, may act as transcription activator. Plays a role in neurogenesis by regulating neurite pruning between left and right AIM neurons and left and right RIF neurons during larval development. Regulates olfactory plasticity. The protein is Mblk-1-related factor 1 of Caenorhabditis elegans.